The primary structure comprises 206 residues: Glycerol-3-phosphate acyltransferase (206 aa).

6 helical membrane-spanning segments follow: residues 6–26 (IFLA…PSGF), 57–77 (KAAL…ILIA), 86–106 (FHVI…WLNW), 118–138 (VFLG…MAVL), 143–163 (IVSL…FLSL), and 165–185 (EASF…MVLW).

This sequence belongs to the PlsY family. As to quaternary structure, probably interacts with PlsX.

It localises to the cell inner membrane. It carries out the reaction an acyl phosphate + sn-glycerol 3-phosphate = a 1-acyl-sn-glycero-3-phosphate + phosphate. It functions in the pathway lipid metabolism; phospholipid metabolism. Catalyzes the transfer of an acyl group from acyl-phosphate (acyl-PO(4)) to glycerol-3-phosphate (G3P) to form lysophosphatidic acid (LPA). This enzyme utilizes acyl-phosphate as fatty acyl donor, but not acyl-CoA or acyl-ACP. The sequence is that of Glycerol-3-phosphate acyltransferase from Prochlorococcus marinus (strain MIT 9211).